A 137-amino-acid chain; its full sequence is Flavodoxin (137 aa).

Positions 2 to 137 (VEIVYWSGTG…KELGEAAAKA (136 aa)) constitute a Flavodoxin-like domain.

It belongs to the flavodoxin family. FMN is required as a cofactor.

Its function is as follows. Low-potential electron donor to a number of redox enzymes. The protein is Flavodoxin of Megasphaera elsdenii.